Reading from the N-terminus, the 633-residue chain is Probable sodium/potassium/calcium exchanger CG1090 (633 aa).

An N-terminal signal peptide occupies residues methionine 1 to glycine 21. Over aspartate 22–histidine 111 the chain is Extracellular. The helical transmembrane segment at glycine 112–cysteine 132 threads the bilayer. Residues aspartate 133–threonine 157 are Cytoplasmic-facing. The stretch at valine 153–phenylalanine 193 is one Alpha-1 repeat. The chain crosses the membrane as a helical span at residues phenylalanine 158 to alanine 178. Residues lysine 179–aspartate 181 lie on the Extracellular side of the membrane. A helical transmembrane segment spans residues isoleucine 182 to cysteine 202. The Cytoplasmic segment spans residues alanine 203–aspartate 220. A run of 2 helical transmembrane segments spans residues cysteine 221 to serine 241 and cysteine 242 to asparagine 262. Topologically, residues threonine 263–proline 427 are extracellular. 3 stretches are compositionally biased toward polar residues: residues tyrosine 298–lysine 310, alanine 320–asparagine 333, and glutamine 395–glycine 405. Residues tyrosine 298–aspartate 422 form a disordered region. Residues lysine 411–aspartate 422 show a composition bias toward basic and acidic residues. A helical membrane pass occupies residues methionine 428–cysteine 448. At lysine 449–phenylalanine 468 the chain is on the cytoplasmic side. Residues leucine 469–isoleucine 489 traverse the membrane as a helical segment. Residues glycine 490–methionine 500 are Extracellular-facing. Residues glycine 501 to isoleucine 521 traverse the membrane as a helical segment. An Alpha-2 repeat occupies alanine 506 to asparagine 537. Over lysine 522–glycine 535 the chain is Cytoplasmic. The helical transmembrane segment at serine 536–isoleucine 556 threads the bilayer. The Extracellular portion of the chain corresponds to lysine 557–glycine 568. Residues leucine 569 to leucine 589 traverse the membrane as a helical segment. Over asparagine 590–arginine 597 the chain is Cytoplasmic. A helical membrane pass occupies residues leucine 598–leucine 618. Residues asparagine 619–tyrosine 633 lie on the Extracellular side of the membrane.

The protein belongs to the Ca(2+):cation antiporter (CaCA) (TC 2.A.19) family. SLC24A subfamily.

It is found in the membrane. May function in the removal and maintenance of calcium homeostasis. Transports one Ca(2+) and 1 K(+) in exchange for 4 Na(+). The polypeptide is Probable sodium/potassium/calcium exchanger CG1090 (Drosophila melanogaster (Fruit fly)).